Here is a 152-residue protein sequence, read N- to C-terminus: Large ribosomal subunit protein bL9 (152 aa).

The protein belongs to the bacterial ribosomal protein bL9 family.

Binds to the 23S rRNA. In Picosynechococcus sp. (strain ATCC 27264 / PCC 7002 / PR-6) (Agmenellum quadruplicatum), this protein is Large ribosomal subunit protein bL9.